The primary structure comprises 517 residues: Beta-glucosidase 1 (517 aa).

The N-terminal stretch at 1–22 is a signal peptide; that stretch reads MEDVLTLITMIVLLLLAFHGFG. A beta-D-glucoside is bound by residues glutamine 48, histidine 145, and 190–191; that span reads NE. Glutamate 191 serves as the catalytic Proton donor. Cysteines 210 and 217 form a disulfide. N-linked (GlcNAc...) asparagine glycans are attached at residues asparagine 216 and asparagine 221. Residues tyrosine 333 and glutamate 406 each contribute to the a beta-D-glucoside site. The active-site Nucleophile is glutamate 406. Asparagine 441 is a glycosylation site (N-linked (GlcNAc...) asparagine). A beta-D-glucoside is bound by residues tryptophan 451 and phenylalanine 467. N-linked (GlcNAc...) asparagine glycans are attached at residues asparagine 473 and asparagine 512.

Belongs to the glycosyl hydrolase 1 family.

It catalyses the reaction Hydrolysis of terminal, non-reducing beta-D-glucosyl residues with release of beta-D-glucose.. This is Beta-glucosidase 1 from Arabidopsis thaliana (Mouse-ear cress).